The following is a 449-amino-acid chain: Elongation factor 1-alpha (449 aa).

The 230-residue stretch at K5 to V234 folds into the tr-type G domain. A G1 region spans residues G14–S21. G14–S21 provides a ligand contact to GTP. An N6,N6-dimethyllysine modification is found at K55. The G2 stretch occupies residues G70 to D74. K79 bears the N6,N6,N6-trimethyllysine mark. The G3 stretch occupies residues D91 to G94. GTP-binding positions include D91–H95 and N153–D156. The segment at N153–D156 is G4. Residue K187 is modified to N6,N6,N6-trimethyllysine. Residues S194–W196 are G5. K265 carries the post-translational modification N6-methyllysine. N6,N6,N6-trimethyllysine is present on residues K310 and K400.

Belongs to the TRAFAC class translation factor GTPase superfamily. Classic translation factor GTPase family. EF-Tu/EF-1A subfamily.

It localises to the cytoplasm. Its function is as follows. This protein promotes the GTP-dependent binding of aminoacyl-tRNA to the A-site of ribosomes during protein biosynthesis. The polypeptide is Elongation factor 1-alpha (Pyropia yezoensis (Susabi-nori)).